Consider the following 500-residue polypeptide: MNDFPWLTIIVIFPISAGSLMLFLPHRGNKVNKWYTICICILELLLTTYAFCYNFKMDDPLIQLSEGYKWINFFDFYWRMGVDGLSIGTILLTGFITTLATLAAFPVTRDSRLFHFLMLAMYSGQIGSFSSRDLLLFFIMWELELIPVYLLLAMWGGKKRLYSATKFILYTAGSSIFLLIGVLGLSLYGSNEPTLNLELLANQSYPVTLEILFYIGFLIAFAVKLPIIPLHTWLPDTHGEAHYSTCMLLAGILLKMGAYGLVRINMELLPHAHSMFSPWLLVVGTIQIIYAASTSPGQRNLKKRIAYSSVSHMGFIIIGISSITDPGLNGAILQIISHGFIGAALFFLAGTSYDRIRLVYLDEMGGMAISIPKIFTMFTILSMASLALPGMSGFVAELIVFFGIITSQKYFLISKILIIFVMAIGMILTPIYLLSMSRQMFYGYKLINVKNFSFFDSGPRELFLSISILLPIIGIGIYPDFVLSLASDKVESILSNYFYG.

Helical transmembrane passes span 4–24 (FPWL…MLFL), 35–55 (YTIC…CYNF), 87–107 (IGTI…AFPV), 113–130 (LFHF…GSFS), 134–154 (LLLF…LLAM), 167–187 (FILY…GLSL), 211–231 (ILFY…IPLH), 242–262 (HYST…YGLV), 272–292 (AHSM…IYAA), 305–325 (IAYS…SITD), 330–350 (GAIL…FLAG), 386–406 (LALP…GIIT), 416–436 (ILII…LLSM), and 462–482 (LFLS…PDFV).

The protein belongs to the complex I subunit 4 family.

It is found in the plastid. The protein localises to the chloroplast thylakoid membrane. The catalysed reaction is a plastoquinone + NADH + (n+1) H(+)(in) = a plastoquinol + NAD(+) + n H(+)(out). It catalyses the reaction a plastoquinone + NADPH + (n+1) H(+)(in) = a plastoquinol + NADP(+) + n H(+)(out). The polypeptide is NAD(P)H-quinone oxidoreductase chain 4, chloroplastic (Lepidium virginicum (Virginia pepperweed)).